The primary structure comprises 268 residues: Tryptophan synthase alpha chain (268 aa).

Active-site proton acceptor residues include Glu47 and Asp58.

This sequence belongs to the TrpA family. Tetramer of two alpha and two beta chains.

Its subcellular location is the plastid. The protein resides in the chloroplast. It catalyses the reaction (1S,2R)-1-C-(indol-3-yl)glycerol 3-phosphate + L-serine = D-glyceraldehyde 3-phosphate + L-tryptophan + H2O. It participates in amino-acid biosynthesis; L-tryptophan biosynthesis; L-tryptophan from chorismate: step 5/5. Functionally, the alpha subunit is responsible for the aldol cleavage of indoleglycerol phosphate to indole and glyceraldehyde 3-phosphate. In Gracilaria tenuistipitata var. liui (Red alga), this protein is Tryptophan synthase alpha chain.